We begin with the raw amino-acid sequence, 1045 residues long: MPIQEAEKSYKPHVIEEKVQSFWEERDIYERVKELREEGPRYSFLDGPPYCSGRIHLGTAWNKIMKDSYLRFKSMRGFNVRRQPGWDTHGLPIEHKVEGILGVRSKKDIEDKIGIEEFVRKCREFAMENKAVMTSQFQRLGVWMDWDDPYVTFDPAYMESCWWTLKRAHEKDLLLRDLRVITWCPRCETALALAEIDYHEKEDPSIYVKFPVSGDTYILVWTTTPWTLPANMAVAVHPDFDYAHTRLDGETYIMAEALVEKVLGEEAEIIKTVRGSELEGLTYRHPLDEEVPCHRDMEHRVILGDHVTLTEGTGCVHTAPGHGPEDFEIGKEYGLPVFCPVDEAGVFTEDAGKYRGLFVKDADSDIIDDLRSKNLLLRAETISHRYGFCWRCKTPIIYLATEQWFLKITEIKDKMLSELDRVQWIPSWAGESRFRNWIENARDWTISRQRYWGIPIPIWVCEDCDSIHVVGSIGELRELAVEGQLEGDFIHRPHVDRIILECGRCGGRMKRTPDVLDVWIDSGVAGWAALHYPREKELFSEWFPYDFITEGHDQTRGWFYSQLGCGVIALDETPYRRVLMHGFTLDEEGRKMSKSLGNVVEPEDVIEKYGADVLRFYLLWANKPWEDLKFVWDELKNVNKMFNILWNVYVFATTYMSLDRFQPGDHELEDLHFRDEDRWIISRVNSVALKVTEALDNLHFHRATREIHDFIVEDLSRWYIRLIRSRTWIERDDPDKLAAYHSLYTALKTLIVTLSPIAPHVCEDIYQNLVRGAEPDSPESIHMLDWMVSEDAVDGKLEAEMDIVREIIEACARARDTARYKLRWPVREIVVVSEDDKVLEAAESLKGVIAEQANAKSIRTSTEFPDMRIIAKPNPATLGPKLRQDMPPVMRKLEEADGAEVKAALESEGSFRVDLDGRIIVLEPDDIIFETELPENIVNAQFEGGSVFVDTELTPEIMSEAMARELVRRIQDMRKDLDLDVEARIEVSVKCSPEFRELTEPQREFVENEVRASHLSFDYTELEYTKEWKISDENLIISIKPSDKV.

A 'HIGH' region motif is present at residues 49–59 (PYCSGRIHLGT). The 'KMSKS' region motif lies at 591 to 595 (KMSKS). K594 contacts ATP.

The protein belongs to the class-I aminoacyl-tRNA synthetase family. IleS type 2 subfamily. As to quaternary structure, monomer. Zn(2+) serves as cofactor.

It localises to the cytoplasm. The enzyme catalyses tRNA(Ile) + L-isoleucine + ATP = L-isoleucyl-tRNA(Ile) + AMP + diphosphate. Its function is as follows. Catalyzes the attachment of isoleucine to tRNA(Ile). As IleRS can inadvertently accommodate and process structurally similar amino acids such as valine, to avoid such errors it has two additional distinct tRNA(Ile)-dependent editing activities. One activity is designated as 'pretransfer' editing and involves the hydrolysis of activated Val-AMP. The other activity is designated 'posttransfer' editing and involves deacylation of mischarged Val-tRNA(Ile). This chain is Isoleucine--tRNA ligase, found in Methanothermobacter marburgensis (strain ATCC BAA-927 / DSM 2133 / JCM 14651 / NBRC 100331 / OCM 82 / Marburg) (Methanobacterium thermoautotrophicum).